The primary structure comprises 634 residues: Sodium-dependent neutral amino acid transporter B(0)AT1 (634 aa).

Residues 1-41 (MVRLVLPNPGLEDRIPSLDELEVIEKEEASSRPKWDNKAQY) are Cytoplasmic-facing. Ser17 carries the phosphoserine modification. Residues 42 to 62 (MLTCVGFCVGLGNVWRFPYLC) form a helical membrane-spanning segment. The Extracellular portion of the chain corresponds to 63 to 65 (QSH). The helical transmembrane segment at 66–86 (GGGAFMIPFLILLVLEGIPLL) threads the bilayer. Residues 87–119 (HLEFAIGQRLRKGSVGVWSSIHPALKGVGIASM) lie on the Cytoplasmic side of the membrane. The chain crosses the membrane as a helical span at residues 120–140 (FVSFMVGLYYNTIIAWVMWYF). Over 141-192 (FNSFQEPLPWSECPLNQNQTGYVEECAKSSSVDYFWYRETLNISTSISDSGS) the chain is Extracellular. 2 N-linked (GlcNAc...) asparagine glycosylation sites follow: Asn158 and Asn182. A helical membrane pass occupies residues 193–213 (IQWWILLCLTCAWSVLYVCTI). At 214–221 (RGIETTGK) the chain is on the cytoplasmic side. The helical transmembrane segment at 222-242 (AVYITSTLPYVVLTIFLIRGL) threads the bilayer. The Extracellular segment spans residues 243 to 268 (TLKGATNGIVFLFTPNITELSNPNTW). N-linked (GlcNAc...) asparagine glycosylation is present at Asn258. Residues 269-289 (LDAGAQVFYSFSLAFGGLISF) form a helical membrane-spanning segment. Residues 290–304 (SSYNSVHNNCEMDSV) lie on the Cytoplasmic side of the membrane. A helical transmembrane segment spans residues 305–325 (IVSIINGFTSVYAATVVYSII). Residues 326–413 (GFRATERFDD…TEAITKMPVS (88 aa)) lie on the Extracellular side of the membrane. N-linked (GlcNAc...) asparagine glycosylation is found at Asn354 and Asn368. The helical transmembrane segment at 414–434 (PLWSVLFFIMLFCLGLSSMFG) threads the bilayer. The Cytoplasmic portion of the chain corresponds to 435-456 (NMEGVVVPLQDLNITPKKWPKE). Residues 457 to 477 (LLTGLICLGTYLIAFIFTLNS) form a helical membrane-spanning segment. Residues 478 to 490 (GQYWLSLLDSYAG) lie on the Extracellular side of the membrane. A helical membrane pass occupies residues 491-511 (SIPLLIIAFCEMFAVVYVYGV). Over 512-531 (DRFNKDIEFMIGHKPNIFWQ) the chain is Cytoplasmic. Residues 532–552 (VTWRVVSPLIMLVIFLFFFVI) traverse the membrane as a helical segment. Over 553-581 (EVNKQLMYSVWDPDYEEFPKSQKVPYPDW) the chain is Extracellular. The helical transmembrane segment at 582–602 (VYAVVVIVAGVPCLTIPCFAI) threads the bilayer. Topologically, residues 603–634 (YKLIRNYCQKSGDQHGLVNALSTASVNGDLKN) are cytoplasmic. Position 627 is a phosphoserine (Ser627).

It belongs to the sodium:neurotransmitter symporter (SNF) (TC 2.A.22) family. SLC6A19 subfamily. As to quaternary structure, interacts in a tissue-specific manner with ACE2 in small intestine and with CLTRN in the kidney. Interacts with CLTRN; this interaction is required for trafficking of SLC6A19 to the plasma membrane and for its catalytic activation in kidneys. Interacts with ACE2; this interaction is required for trafficking of SLC6A19 to the plasma membrane and for its catalytic activation in intestine. Interacts with ANPEP; the interaction positively regulates its amino acid transporter activity.

It is found in the membrane. It catalyses the reaction L-alanine(in) + Na(+)(in) = L-alanine(out) + Na(+)(out). The enzyme catalyses L-cysteine(in) + Na(+)(in) = L-cysteine(out) + Na(+)(out). It carries out the reaction L-glutamine(in) + Na(+)(in) = L-glutamine(out) + Na(+)(out). The catalysed reaction is glycine(in) + Na(+)(in) = glycine(out) + Na(+)(out). It catalyses the reaction L-isoleucine(in) + Na(+)(in) = L-isoleucine(out) + Na(+)(out). The enzyme catalyses L-leucine(in) + Na(+)(in) = L-leucine(out) + Na(+)(out). It carries out the reaction L-methionine(in) + Na(+)(in) = L-methionine(out) + Na(+)(out). The catalysed reaction is L-phenylalanine(in) + Na(+)(in) = L-phenylalanine(out) + Na(+)(out). It catalyses the reaction L-serine(in) + Na(+)(in) = L-serine(out) + Na(+)(out). The enzyme catalyses L-tryptophan(in) + Na(+)(in) = L-tryptophan(out) + Na(+)(out). It carries out the reaction L-tyrosine(in) + Na(+)(in) = L-tyrosine(out) + Na(+)(out). The catalysed reaction is L-valine(in) + Na(+)(in) = L-valine(out) + Na(+)(out). Functionally, transporter that mediates resorption of neutral amino acids across the apical membrane of renal and intestinal epithelial cells. This uptake is sodium-dependent and chloride-independent. Requires CLTRN in kidney or ACE2 in intestine for cell surface expression and amino acid transporter activity. This Rattus norvegicus (Rat) protein is Sodium-dependent neutral amino acid transporter B(0)AT1.